Here is a 182-residue protein sequence, read N- to C-terminus: NADH-quinone oxidoreductase subunit B (182 aa).

4 residues coordinate [4Fe-4S] cluster: Cys-46, Cys-47, Cys-112, and Cys-141.

This sequence belongs to the complex I 20 kDa subunit family. As to quaternary structure, NDH-1 is composed of 14 different subunits. Subunits NuoB, C, D, E, F, and G constitute the peripheral sector of the complex. Requires [4Fe-4S] cluster as cofactor.

The protein resides in the cell inner membrane. The enzyme catalyses a quinone + NADH + 5 H(+)(in) = a quinol + NAD(+) + 4 H(+)(out). Its function is as follows. NDH-1 shuttles electrons from NADH, via FMN and iron-sulfur (Fe-S) centers, to quinones in the respiratory chain. The immediate electron acceptor for the enzyme in this species is believed to be a menaquinone. Couples the redox reaction to proton translocation (for every two electrons transferred, four hydrogen ions are translocated across the cytoplasmic membrane), and thus conserves the redox energy in a proton gradient. This Flavobacterium johnsoniae (strain ATCC 17061 / DSM 2064 / JCM 8514 / BCRC 14874 / CCUG 350202 / NBRC 14942 / NCIMB 11054 / UW101) (Cytophaga johnsonae) protein is NADH-quinone oxidoreductase subunit B.